The primary structure comprises 282 residues: Ribosomal RNA small subunit methyltransferase I (282 aa).

Belongs to the methyltransferase superfamily. RsmI family.

It is found in the cytoplasm. The catalysed reaction is cytidine(1402) in 16S rRNA + S-adenosyl-L-methionine = 2'-O-methylcytidine(1402) in 16S rRNA + S-adenosyl-L-homocysteine + H(+). Functionally, catalyzes the 2'-O-methylation of the ribose of cytidine 1402 (C1402) in 16S rRNA. This chain is Ribosomal RNA small subunit methyltransferase I, found in Pseudomonas aeruginosa (strain ATCC 15692 / DSM 22644 / CIP 104116 / JCM 14847 / LMG 12228 / 1C / PRS 101 / PAO1).